We begin with the raw amino-acid sequence, 491 residues long: Phosphoethanolamine N-methyltransferase 1 (491 aa).

Alanine 2 is subject to N-acetylalanine. 6 residues coordinate S-adenosyl-L-homocysteine: glycine 61, arginine 66, aspartate 82, aspartate 107, valine 108, and asparagine 126. Residues serine 159, serine 164, glycine 165, arginine 169, and tyrosine 176 each coordinate phosphocholine. N-methylethanolamine phosphate-binding positions include glutamine 245–tyrosine 246 and tyrosine 254. Tyrosine 254 contributes to the phosphocholine binding site. The S-adenosyl-L-homocysteine site is built by valine 263, serine 264, glycine 290, aspartate 312, aspartate 338, cysteine 339, and arginine 355. 5 residues coordinate phosphocholine: tyrosine 386, tyrosine 400, arginine 404, tyrosine 406, and lysine 472. Residues tyrosine 386, tyrosine 400, arginine 404 to tyrosine 406, and lysine 472 each bind N-methylethanolamine phosphate.

It belongs to the class I-like SAM-binding methyltransferase superfamily. PEAMT family. As to expression, highly expressed in the meristem and elongation zones of the root. Expressed in differentiated root epidermal cells. Highly expressed in leaf vasculature.

The protein localises to the cytoplasm. The enzyme catalyses phosphoethanolamine + S-adenosyl-L-methionine = N-methylethanolamine phosphate + S-adenosyl-L-homocysteine + H(+). It carries out the reaction N-methylethanolamine phosphate + S-adenosyl-L-methionine = N,N-dimethylethanolamine phosphate + S-adenosyl-L-homocysteine + H(+). The catalysed reaction is N,N-dimethylethanolamine phosphate + S-adenosyl-L-methionine = phosphocholine + S-adenosyl-L-homocysteine + H(+). It participates in phospholipid metabolism; phosphatidylcholine biosynthesis; phosphocholine from phosphoethanolamine: step 1/1. Involved in phosphocholine biosynthesis. Catalyzes the N-methylation of phosphoethanolamine, phosphomonomethylethanolamine and phosphodimethylethanolamine, the three methylation steps required to convert phosphoethanolamine to phosphocholine (PC). Required for root system development and epidermal cell integrity through its role in choline and phospholipid metabolism. In association with NMT3, regulates PC homeostasis, phase transition at the shoot apex, coordinated organ development, and fertility. In association with NMT3, involved in phosphatidylcholine biosynthesis and vascular development. In association with NMT2, involved in the production of phosphatidylcholine in roots, essential for root development. In association with NMT2 produce phosphocholine mainly for leaf growth maintenance. Contributes to the regulation of overall root zonation dynamics through reactive oxygen species (ROS) and auxin-regulated cell differentiation. Participates in root development of primary root elongation under salt stress conditions by balancing reactive oxygen species (ROS) production and distribution through abscisic acid (ABA) signaling. This Arabidopsis thaliana (Mouse-ear cress) protein is Phosphoethanolamine N-methyltransferase 1.